Here is a 440-residue protein sequence, read N- to C-terminus: Chromosomal replication initiator protein DnaA (440 aa).

The interval 1–69 is domain I, interacts with DnaA modulators; that stretch reads MKERILQEIK…VKVVLGNDAT (69 aa). Residues 69–96 are domain II; it reads TFEITYEAFEPHSSYSEPLVKKRAVLLT. The tract at residues 97–313 is domain III, AAA+ region; that stretch reads PLNPDYTFEN…GAIIKLLVYK (217 aa). Residues Val108, Asn113, Gly140, Leu141, Gly142, Lys143, Thr144, His145, and Arg300 each contribute to the ADP site. Gly140 lines the ATP pocket. ATP is bound by residues Gly142, Lys143, and Thr144. Thr144 provides a ligand contact to Mg(2+). The interval 314–440 is domain IV, binds dsDNA; sequence ETTGKEVDLK…GEISRRALSG (127 aa).

It belongs to the DnaA family. As to quaternary structure, oligomerizes as a right-handed, spiral filament on DNA at oriC.

It localises to the cytoplasm. Functionally, plays an essential role in the initiation and regulation of chromosomal replication. ATP-DnaA binds to the origin of replication (oriC) to initiate formation of the DNA replication initiation complex once per cell cycle. Binds the DnaA box (a 9 base pair repeat at the origin) and separates the double-stranded (ds)DNA. Forms a right-handed helical filament on oriC DNA; dsDNA binds to the exterior of the filament while single-stranded (ss)DNA is stabiized in the filament's interior. The ATP-DnaA-oriC complex binds and stabilizes one strand of the AT-rich DNA unwinding element (DUE), permitting loading of DNA polymerase. After initiation quickly degrades to an ADP-DnaA complex that is not apt for DNA replication. Binds acidic phospholipids. In terms of biological role, the DnaA box consensus is 5'-[ATC][AT]AC[CT]TACCA[CT][CTA]-3' in this bacterium. Mutagenesis of residues that line the central pore blocks dsDNA separation. The protein is Chromosomal replication initiator protein DnaA of Thermotoga maritima (strain ATCC 43589 / DSM 3109 / JCM 10099 / NBRC 100826 / MSB8).